The chain runs to 160 residues: Ubiquitin-like protein 4A (160 aa).

Residues 1–76 (MQLTVKALQG…LNLVVKPLEK (76 aa)) enclose the Ubiquitin-like domain. A Glycyl lysine isopeptide (Lys-Gly) (interchain with G-Cter in ubiquitin) cross-link involves residue lysine 48. The interval 99 to 141 (WQLIAKVLARHFSAADASRVLDQLQRDYERSLSRLTLDDIERL) is required and sufficient for interaction with BAG6.

Component of the BAG6/BAT3 complex, at least composed of BAG6, UBL4A and GET4/TRC35. Interacts with BAG6; the interaction is direct and required for UBL4A protein stability. Interacts with USP13; may be indirect via BAG6. Post-translationally, polyubiquitinated. Ubiquitination by AMFR and deubiquitination by USP13 may regulate the interaction between the BAG6/BAT complex and SGTA and therefore may regulate client proteins fate.

The protein resides in the cytoplasm. Its subcellular location is the cytosol. The protein localises to the nucleus. Functionally, as part of a cytosolic protein quality control complex, the BAG6/BAT3 complex, maintains misfolded and hydrophobic patches-containing proteins in a soluble state and participates in their proper delivery to the endoplasmic reticulum or alternatively can promote their sorting to the proteasome where they undergo degradation. The BAG6/BAT3 complex is involved in the post-translational delivery of tail-anchored/type II transmembrane proteins to the endoplasmic reticulum membrane. Recruited to ribosomes, it interacts with the transmembrane region of newly synthesized tail-anchored proteins and together with SGTA and ASNA1 mediates their delivery to the endoplasmic reticulum. Client proteins that cannot be properly delivered to the endoplasmic reticulum are ubiquitinated and sorted to the proteasome. Similarly, the BAG6/BAT3 complex also functions as a sorting platform for proteins of the secretory pathway that are mislocalized to the cytosol either delivering them to the proteasome for degradation or to the endoplasmic reticulum. The BAG6/BAT3 complex also plays a role in the endoplasmic reticulum-associated degradation (ERAD), a quality control mechanism that eliminates unwanted proteins of the endoplasmic reticulum through their retrotranslocation to the cytosol and their targeting to the proteasome. It maintains these retrotranslocated proteins in an unfolded yet soluble state condition in the cytosol to ensure their proper delivery to the proteasome. This chain is Ubiquitin-like protein 4A (UBL4A), found in Rhinolophus ferrumequinum (Greater horseshoe bat).